The following is a 389-amino-acid chain: Lipid-A-disaccharide synthase (389 aa).

Belongs to the LpxB family.

It catalyses the reaction a lipid X + a UDP-2-N,3-O-bis[(3R)-3-hydroxyacyl]-alpha-D-glucosamine = a lipid A disaccharide + UDP + H(+). It functions in the pathway bacterial outer membrane biogenesis; LPS lipid A biosynthesis. Functionally, condensation of UDP-2,3-diacylglucosamine and 2,3-diacylglucosamine-1-phosphate to form lipid A disaccharide, a precursor of lipid A, a phosphorylated glycolipid that anchors the lipopolysaccharide to the outer membrane of the cell. The sequence is that of Lipid-A-disaccharide synthase from Burkholderia multivorans (strain ATCC 17616 / 249).